Reading from the N-terminus, the 300-residue chain is Glucose and ribitol dehydrogenase homolog (300 aa).

Over residues Met1–Gln14 the composition is skewed to polar residues. The disordered stretch occupies residues Met1 to Pro23. Residue Ile44 to Ala68 coordinates NAD(+). Residue Ser192 coordinates substrate. Tyr205 acts as the Proton acceptor in catalysis.

It belongs to the short-chain dehydrogenases/reductases (SDR) family.

Functionally, may act as a short alcohol-polyol-sugar dehydrogenase possibly related to carbohydrate metabolism and the acquisition of desiccation tolerance. May also be involved in signal transduction. The polypeptide is Glucose and ribitol dehydrogenase homolog (Oryza sativa subsp. japonica (Rice)).